The chain runs to 449 residues: Endoglucanase A (449 aa).

A signal peptide (tat-type signal) is located at residues 1–31 (MSTRRTAAALLAAAAVAVGGLTALTTTAAQA). In terms of domain architecture, CBM2 spans 32 to 137 (APGCRVDYAV…SLNGTTCTGT (106 aa)). The cysteines at positions 35 and 134 are disulfide-linked. Positions 127 to 170 (FSLNGTTCTGTVPTTSPTPTPTPTTPTPTPTPTPTPTPTVTPQP) are disordered. Positions 132–141 (TTCTGTVPTT) are enriched in low complexity. Residues 139–168 (PTTSPTPTPTPTTPTPTPTPTPTPTPTVTP) are linker ('hinge') (Pro-Thr box). Residues 142 to 167 (SPTPTPTPTTPTPTPTPTPTPTPTVT) are compositionally biased toward pro residues. Asp-247 is an active-site residue. Intrachain disulfides connect Cys-248–Cys-291 and Cys-390–Cys-426. The Proton donor role is filled by Asp-283. Asp-423 acts as the Nucleophile in catalysis. Positions 438–449 (EIALEMARNARW) are catalytic.

This sequence belongs to the glycosyl hydrolase 6 (cellulase B) family. Post-translationally, the linker region (also termed 'hinge') may be a potential site for proteolysis. In terms of processing, predicted to be exported by the Tat system. The position of the signal peptide cleavage has not been experimentally proven.

It catalyses the reaction Endohydrolysis of (1-&gt;4)-beta-D-glucosidic linkages in cellulose, lichenin and cereal beta-D-glucans.. In terms of biological role, the biological conversion of cellulose to glucose generally requires three types of hydrolytic enzymes: (1) Endoglucanases which cut internal beta-1,4-glucosidic bonds; (2) Exocellobiohydrolases that cut the disaccharide cellobiose from the non-reducing end of the cellulose polymer chain; (3) Beta-1,4-glucosidases which hydrolyze the cellobiose and other short cello-oligosaccharides to glucose. The chain is Endoglucanase A (cenA) from Cellulomonas fimi.